Here is a 231-residue protein sequence, read N- to C-terminus: Orotate phosphoribosyltransferase (231 aa).

Residues K27, 79 to 80, R106, K107, K110, H112, and 133 to 141 contribute to the 5-phospho-alpha-D-ribose 1-diphosphate site; these read YK and DDVMTAGTA. Orotate is bound by residues T137 and R166.

The protein belongs to the purine/pyrimidine phosphoribosyltransferase family. PyrE subfamily. Homodimer. It depends on Mg(2+) as a cofactor.

The enzyme catalyses orotidine 5'-phosphate + diphosphate = orotate + 5-phospho-alpha-D-ribose 1-diphosphate. It participates in pyrimidine metabolism; UMP biosynthesis via de novo pathway; UMP from orotate: step 1/2. Functionally, catalyzes the transfer of a ribosyl phosphate group from 5-phosphoribose 1-diphosphate to orotate, leading to the formation of orotidine monophosphate (OMP). This is Orotate phosphoribosyltransferase from Bifidobacterium longum (strain DJO10A).